The sequence spans 289 residues: Acetyl-coenzyme A carboxylase carboxyl transferase subunit beta (289 aa).

The 262-residue stretch at 28-289 (VMTKCPKCKK…QGGEMAVWQS (262 aa)) folds into the CoA carboxyltransferase N-terminal domain. Positions 32, 35, 51, and 54 each coordinate Zn(2+). The segment at 32 to 54 (CPKCKKIMYTKEVLKNLKVCVNC) adopts a C4-type zinc-finger fold.

Belongs to the AccD/PCCB family. As to quaternary structure, acetyl-CoA carboxylase is a heterohexamer composed of biotin carboxyl carrier protein (AccB), biotin carboxylase (AccC) and two subunits each of ACCase subunit alpha (AccA) and ACCase subunit beta (AccD). Requires Zn(2+) as cofactor.

It localises to the cytoplasm. The catalysed reaction is N(6)-carboxybiotinyl-L-lysyl-[protein] + acetyl-CoA = N(6)-biotinyl-L-lysyl-[protein] + malonyl-CoA. Its pathway is lipid metabolism; malonyl-CoA biosynthesis; malonyl-CoA from acetyl-CoA: step 1/1. In terms of biological role, component of the acetyl coenzyme A carboxylase (ACC) complex. Biotin carboxylase (BC) catalyzes the carboxylation of biotin on its carrier protein (BCCP) and then the CO(2) group is transferred by the transcarboxylase to acetyl-CoA to form malonyl-CoA. The chain is Acetyl-coenzyme A carboxylase carboxyl transferase subunit beta from Bacillus anthracis (strain A0248).